We begin with the raw amino-acid sequence, 334 residues long: Glycerol-3-phosphate dehydrogenase [NAD(P)+] (334 aa).

The NADPH site is built by Trp-13, Arg-33, and Lys-106. The sn-glycerol 3-phosphate site is built by Lys-106, Gly-137, and Ser-139. Position 141 (Ala-141) interacts with NADPH. 5 residues coordinate sn-glycerol 3-phosphate: Lys-192, Asp-245, Ser-255, Arg-256, and Asn-257. The active-site Proton acceptor is Lys-192. Position 256 (Arg-256) interacts with NADPH. Val-280 and Glu-282 together coordinate NADPH.

Belongs to the NAD-dependent glycerol-3-phosphate dehydrogenase family.

The protein resides in the cytoplasm. The enzyme catalyses sn-glycerol 3-phosphate + NAD(+) = dihydroxyacetone phosphate + NADH + H(+). It carries out the reaction sn-glycerol 3-phosphate + NADP(+) = dihydroxyacetone phosphate + NADPH + H(+). It functions in the pathway membrane lipid metabolism; glycerophospholipid metabolism. Its function is as follows. Catalyzes the reduction of the glycolytic intermediate dihydroxyacetone phosphate (DHAP) to sn-glycerol 3-phosphate (G3P), the key precursor for phospholipid synthesis. The protein is Glycerol-3-phosphate dehydrogenase [NAD(P)+] of Chlamydia pneumoniae (Chlamydophila pneumoniae).